A 466-amino-acid polypeptide reads, in one-letter code: Methylenetetrahydrofolate--tRNA-(uracil-5-)-methyltransferase TrmFO (466 aa).

12–17 (GAGLAG) contributes to the FAD binding site.

The protein belongs to the MnmG family. TrmFO subfamily. Requires FAD as cofactor.

The protein resides in the cytoplasm. It carries out the reaction uridine(54) in tRNA + (6R)-5,10-methylene-5,6,7,8-tetrahydrofolate + NADH + H(+) = 5-methyluridine(54) in tRNA + (6S)-5,6,7,8-tetrahydrofolate + NAD(+). It catalyses the reaction uridine(54) in tRNA + (6R)-5,10-methylene-5,6,7,8-tetrahydrofolate + NADPH + H(+) = 5-methyluridine(54) in tRNA + (6S)-5,6,7,8-tetrahydrofolate + NADP(+). Catalyzes the folate-dependent formation of 5-methyl-uridine at position 54 (M-5-U54) in all tRNAs. The protein is Methylenetetrahydrofolate--tRNA-(uracil-5-)-methyltransferase TrmFO of Synechococcus elongatus (strain ATCC 33912 / PCC 7942 / FACHB-805) (Anacystis nidulans R2).